Here is a 611-residue protein sequence, read N- to C-terminus: Leukotriene A-4 hydrolase (611 aa).

N6-acetyllysine is present on Lys-73. Residues 135–137 (QCQ) and 267–272 (PYGGME) each bind a peptide. His-296 provides a ligand contact to Zn(2+). Glu-297 acts as the Proton acceptor in catalysis. His-300 and Glu-319 together coordinate Zn(2+). Lys-337 bears the N6-acetyllysine mark. The active-site Proton donor is Tyr-384. N6-acetyllysine is present on Lys-414. Ser-416 carries the phosphoserine modification. 564-566 (RMK) is a binding site for a peptide. The residue at position 573 (Lys-573) is an N6-acetyllysine.

Belongs to the peptidase M1 family. In terms of assembly, monomer. Requires Zn(2+) as cofactor. Phosphorylation at Ser-416 inhibits leukotriene-A4 hydrolase activity.

The protein localises to the cytoplasm. It catalyses the reaction leukotriene A4 + H2O = leukotriene B4. It carries out the reaction (5S,6S)-epoxy-(18R)-hydroxy-(7E,9E,11Z,14Z,16E)-eicosapentaenoate + H2O = resolvin E1. The enzyme catalyses (5S,6S)-epoxy-(18S)-hydroxy-(7E,9E,11Z,14Z,16E)-eicosapentaenoate + H2O = 18S-resolvin E1. The catalysed reaction is Release of the N-terminal residue from a tripeptide.. It functions in the pathway lipid metabolism; leukotriene B4 biosynthesis. Inhibited by bestatin. Inhibited by captopril. The epoxide hydrolase activity is restrained by suicide inactivation that involves binding of LTA4 to Tyr-379. 4-(4-benzylphenyl)thiazol-2-amine (ARM1) selectively inhibits the epoxide hydrolase activity. Its function is as follows. Bifunctional zinc metalloenzyme that comprises both epoxide hydrolase (EH) and aminopeptidase activities. Acts as an epoxide hydrolase to catalyze the conversion of LTA4 to the pro-inflammatory mediator leukotriene B4 (LTB4). Also has aminopeptidase activity, with high affinity for N-terminal arginines of various synthetic tripeptides. In addition to its pro-inflammatory EH activity, may also counteract inflammation by its aminopeptidase activity, which inactivates by cleavage another neutrophil attractant, the tripeptide Pro-Gly-Pro (PGP), a bioactive fragment of collagen generated by the action of matrix metalloproteinase-9 (MMP9) and prolylendopeptidase (PREPL). Involved also in the biosynthesis of resolvin E1 and 18S-resolvin E1 from eicosapentaenoic acid, two lipid mediators that show potent anti-inflammatory and pro-resolving actions. In Rattus norvegicus (Rat), this protein is Leukotriene A-4 hydrolase (Lta4h).